The chain runs to 305 residues: Heterogeneous nuclear ribonucleoprotein A0 (305 aa).

Methionine 1 is modified (N-acetylmethionine). In terms of domain architecture, RRM 1 spans 7–86; that stretch reads CKLFIGGLNV…VELKRAVSRE (80 aa). Serine 68 carries the post-translational modification Phosphoserine. Lysine 80 is covalently cross-linked (Glycyl lysine isopeptide (Lys-Gly) (interchain with G-Cter in SUMO2)). A Phosphoserine; by MAPKAPK2 modification is found at serine 84. Glycyl lysine isopeptide (Lys-Gly) (interchain with G-Cter in SUMO2) cross-links involve residues lysine 96, lysine 98, lysine 99, and lysine 106. Residues 98 to 175 form the RRM 2 domain; the sequence is KKLFVGGLKG…HRVEVKKAVP (78 aa). At lysine 133 the chain carries N6-acetyllysine. Residue arginine 139 is modified to Omega-N-methylarginine. Glycyl lysine isopeptide (Lys-Gly) (interchain with G-Cter in SUMO2) cross-links involve residues lysine 154, lysine 159, lysine 172, and lysine 176. 2 disordered regions span residues 174–214 and 262–305; these read VPKE…KGGG and QSSY…GSSF. Gly residues-rich tracts occupy residues 181-200 and 269-281; these read SGGG…GRGR and KSGG…GSSW. Residue serine 188 is modified to Phosphoserine. Residue arginine 284 is modified to Omega-N-methylarginine. The segment covering 290–305 has biased composition (gly residues); that stretch reads YRGGYGGGGGYGGSSF. Asymmetric dimethylarginine; alternate is present on arginine 291. Residue arginine 291 is modified to Dimethylated arginine; alternate. Arginine 291 bears the Omega-N-methylarginine; alternate mark.

Phosphorylated at Ser-84 by MAPKAPK2 in response to LPS treatment, promoting stabilization of GADD45A mRNA. Post-translationally, arg-291 is dimethylated, probably to asymmetric dimethylarginine.

The protein localises to the nucleus. Functionally, mRNA-binding component of ribonucleosomes. Specifically binds AU-rich element (ARE)-containing mRNAs. Involved in post-transcriptional regulation of cytokines mRNAs. This is Heterogeneous nuclear ribonucleoprotein A0 (HNRNPA0) from Homo sapiens (Human).